A 279-amino-acid chain; its full sequence is DegV domain-containing protein SpyM3_1149 (279 aa).

In terms of domain architecture, DegV spans 4 to 278; that stretch reads IKIVTDSSIT…EGAFAVMVRY (275 aa). Hexadecanoate contacts are provided by threonine 62 and serine 95.

May bind long-chain fatty acids, such as palmitate, and may play a role in lipid transport or fatty acid metabolism. This Streptococcus pyogenes serotype M3 (strain ATCC BAA-595 / MGAS315) protein is DegV domain-containing protein SpyM3_1149.